The following is an 80-amino-acid chain: Cell division protein ZapB (80 aa).

Positions 3–80 form a coiled coil; the sequence is FEVLEQLESK…ALLGKMDEVE (78 aa). Residues 41–53 are compositionally biased toward basic and acidic residues; that stretch reads ANELRSQREELEQ. The disordered stretch occupies residues 41-60; it reads ANELRSQREELEQKSQQAQQ.

This sequence belongs to the ZapB family. Homodimer. The ends of the coiled-coil dimer bind to each other, forming polymers. Interacts with FtsZ.

It is found in the cytoplasm. Functionally, non-essential, abundant cell division factor that is required for proper Z-ring formation. It is recruited early to the divisome by direct interaction with FtsZ, stimulating Z-ring assembly and thereby promoting cell division earlier in the cell cycle. Its recruitment to the Z-ring requires functional FtsA or ZipA. The sequence is that of Cell division protein ZapB from Vibrio campbellii (strain ATCC BAA-1116).